Here is a 511-residue protein sequence, read N- to C-terminus: Pentatricopeptide repeat-containing protein At5g08510 (511 aa).

PPR repeat units follow at residues 46 to 80 (CTFLYNKLIQAYYVHHQPHESIVLYNLLSFDGLRP), 81 to 115 (SHHTFNFIFAASASFSSARPLRLLHSQFFRSGFES), 116 to 146 (DSFCCTTLITAYAKLGALCCARRVFDEMSKR), 147 to 181 (DVPVWNAMITGYQRRGDMKAAMELFDSMPRKNVTS), 182 to 213 (WTTVISGFSQNGNYSEALKMFLCMEKDKSVKP), 214 to 248 (NHITVVSVLPACANLGELEIGRRLEGYARENGFFD), 249 to 279 (NIYVCNATIEMYSKCGMIDVAKRLFEELGNQ), 281 to 315 (NLCSWNSMIGSLATHGKHDEALTLFAQMLREGEKP), 316 to 346 (DAVTFVGLLLACVHGGMVVKGQELFKSMEEV), and 352 to 382 (KLEHYGCMIDLLGRVGKLQEAYDLIKTMPMK). Residues 387 to 462 (VWGTLLGACS…AAGYSYFVEV (76 aa)) form a type E motif region. The interval 463–494 (GVDVHKFTVEDKSHPRSYEIYQVLEEIFRRMK) is type E(+) motif.

It belongs to the PPR family. PCMP-E subfamily.

In Arabidopsis thaliana (Mouse-ear cress), this protein is Pentatricopeptide repeat-containing protein At5g08510 (PCMP-E20).